The following is a 999-amino-acid chain: Probable beta-galactosidase C (999 aa).

Residues 1–21 (MFFFRFLTTVLLLFNAKLLVA) form the signal peptide. The N-linked (GlcNAc...) asparagine glycan is linked to N25. Residues Y80, N125, E127, and N185 each contribute to the substrate site. Catalysis depends on E186, which acts as the Proton donor. N195 carries N-linked (GlcNAc...) asparagine glycosylation. Y249 is a binding site for substrate. C255 and C302 form a disulfide bridge. Residue N274 is glycosylated (N-linked (GlcNAc...) asparagine). E285 acts as the Nucleophile in catalysis. Y351 is a substrate binding site. N389, N441, N512, N519, N600, N675, N713, N757, N808, and N897 each carry an N-linked (GlcNAc...) asparagine glycan.

It belongs to the glycosyl hydrolase 35 family.

It localises to the secreted. The catalysed reaction is Hydrolysis of terminal non-reducing beta-D-galactose residues in beta-D-galactosides.. In terms of biological role, cleaves beta-linked terminal galactosyl residues from gangliosides, glycoproteins, and glycosaminoglycans. In Talaromyces marneffei (strain ATCC 18224 / CBS 334.59 / QM 7333) (Penicillium marneffei), this protein is Probable beta-galactosidase C (lacC).